Here is a 466-residue protein sequence, read N- to C-terminus: 20-hydroxyecdysone protein (466 aa).

An N-terminal signal peptide occupies residues 1–16 (MKPVALILVFLAISQA). The 1; approximate repeat unit spans residues 48–50 (EVK). A 16 X repeats region spans residues 48 to 157 (EVKAEEVKPE…EIKKEATEIK (110 aa)). One copy of the 2; approximate repeat lies at 53 to 55 (EVK). Positions 55–94 (KPEEVKPIAQEEKAKDLKEEVKPEIKPEIKEQPKPDIKDE) are disordered. The stretch at 58 to 60 (EVK) is one 3; approximate repeat. One copy of the 4; approximate repeat lies at 70 to 72 (DLK). The 5; approximate repeat unit spans residues 74 to 76 (EVK). The stretch at 78-80 (EIK) is one 6; approximate repeat. A 7; approximate repeat occupies 82 to 84 (EIK). One copy of the 8; approximate repeat lies at 90–92 (DIK). The stretch at 94-96 (EIK) is one 9; approximate repeat. The 10; approximate repeat unit spans residues 98 to 100 (DLK). The stretch at 102–104 (DIK) is one 11; approximate repeat. Residues 106–108 (ELK) form a 12; approximate repeat. The disordered stretch occupies residues 119–220 (PNAKPLELKE…QQSTTQGNFV (102 aa)). A compositionally biased stretch (basic and acidic residues) spans 124-160 (LELKEKSLEAEEKPQEIKEEVQQPEIKKEATEIKEEP). A 13; approximate repeat occupies 125–127 (ELK). The 14; approximate repeat unit spans residues 139-141 (EIK). The stretch at 148 to 150 (EIK) is one 15; approximate repeat. The 16; approximate repeat unit spans residues 155–157 (EIK). The segment covering 170-180 (AEETVVVPAEE) has biased composition (low complexity). Residues 185–194 (PVEQEQSENQ) are compositionally biased toward polar residues. Residues 203–216 (QATQATPTQQSTTQ) show a composition bias toward low complexity. Residues Asn294 and Asn352 are each glycosylated (N-linked (GlcNAc...) asparagine). Residues 378-435 (RPQNAPAAAPATQATEKPAVDDKIDPANDEVGEFVPESDNELRASGENIDDSFEDAGV) form a disordered region. Residues 379 to 394 (PQNAPAAAPATQATEK) are compositionally biased toward low complexity. Positions 404 to 416 (ANDEVGEFVPESD) are enriched in acidic residues.

The protein resides in the secreted. Probably has an essential role in embryogenesis, induces morphogenesis of imaginal disks, and may participate in multimolecular aggregates. This chain is 20-hydroxyecdysone protein (ImpE2), found in Drosophila melanogaster (Fruit fly).